We begin with the raw amino-acid sequence, 142 residues long: Small ribosomal subunit protein bS6 (142 aa).

Residues 110 to 142 (NKKPSHAKEKHEKTEHAHSHHTEEAGSKESHSE) form a disordered region.

The protein belongs to the bacterial ribosomal protein bS6 family.

In terms of biological role, binds together with bS18 to 16S ribosomal RNA. The sequence is that of Small ribosomal subunit protein bS6 from Helicobacter acinonychis (strain Sheeba).